Here is a 146-residue protein sequence, read N- to C-terminus: D-aminoacyl-tRNA deacylase (146 aa).

The Gly-cisPro motif, important for rejection of L-amino acids signature appears at 137 to 138 (GP).

Belongs to the DTD family. Homodimer.

The protein localises to the cytoplasm. It catalyses the reaction glycyl-tRNA(Ala) + H2O = tRNA(Ala) + glycine + H(+). The enzyme catalyses a D-aminoacyl-tRNA + H2O = a tRNA + a D-alpha-amino acid + H(+). An aminoacyl-tRNA editing enzyme that deacylates mischarged D-aminoacyl-tRNAs. Also deacylates mischarged glycyl-tRNA(Ala), protecting cells against glycine mischarging by AlaRS. Acts via tRNA-based rather than protein-based catalysis; rejects L-amino acids rather than detecting D-amino acids in the active site. By recycling D-aminoacyl-tRNA to D-amino acids and free tRNA molecules, this enzyme counteracts the toxicity associated with the formation of D-aminoacyl-tRNA entities in vivo and helps enforce protein L-homochirality. In Anoxybacillus flavithermus (strain DSM 21510 / WK1), this protein is D-aminoacyl-tRNA deacylase.